The primary structure comprises 245 residues: Ribonuclease 3 (245 aa).

The RNase III domain occupies 17–146 (FTDKMKSLGL…FVGALYLDQG (130 aa)). Glu59 serves as a coordination point for Mg(2+). Residue Asp63 is part of the active site. Mg(2+) is bound by residues Asp132 and Glu135. The active site involves Glu135. Positions 172-241 (DFKTQFQEYV…AEQAYKLMKN (70 aa)) constitute a DRBM domain.

This sequence belongs to the ribonuclease III family. Homodimer. Requires Mg(2+) as cofactor.

The protein localises to the cytoplasm. It carries out the reaction Endonucleolytic cleavage to 5'-phosphomonoester.. Its function is as follows. Digests double-stranded RNA. Involved in the processing of primary rRNA transcript to yield the immediate precursors to the large and small rRNAs (23S and 16S). Processes some mRNAs, and tRNAs when they are encoded in the rRNA operon. Processes pre-crRNA and tracrRNA of type II CRISPR loci if present in the organism. The chain is Ribonuclease 3 from Staphylococcus epidermidis (strain ATCC 12228 / FDA PCI 1200).